A 254-amino-acid chain; its full sequence is MNNVSMRELLEAGAHFGHRTRFWNPKMSEYIFGSRNKIHIINLEKTLPMLNDVTNYVSRLAANKAKILFVGTKRAAQDSIREHAKRCGMPYVDHRWLGGMLTNYKTVRQSIFRLKELKEMKEKGLFNDMIKKEALMLTRELEKLERSLGGIENMGGLPDALFVVDVGFEHIAVEEARRLRIPVIGVVDTNNSPDNIDYVIPGNDDSMRAVDIYVRCVADAILDGKNSNTVGRVSSDSEFVEVTSNSNEEEKSGE.

Belongs to the universal ribosomal protein uS2 family.

The protein is Small ribosomal subunit protein uS2 of Legionella pneumophila (strain Corby).